A 172-amino-acid chain; its full sequence is Signal peptidase complex catalytic subunit SEC11 (172 aa).

Topologically, residues 1 to 14 (MLSSLQNPRQAAAQ) are cytoplasmic. Residues 15–35 (LMNFAMILSTAFMMWKGLSVA) traverse the membrane as a helical; Signal-anchor for type II membrane protein segment. At 36-172 (TDSPSPIVVV…MGLLVVIQRE (137 aa)) the chain is on the lumenal side. Active-site charge relay system residues include S49, H90, and D115. The interval 158–169 (VMLGIMGLLVVI) is C-terminal short (CTS) helix.

Belongs to the peptidase S26B family. Component of the signal peptidase complex (SPC) composed of a catalytic subunit SEC11 and three accessory subunits SPC1, SPC2 and SPC3. The complex induces a local thinning of the ER membrane which is used to measure the length of the signal peptide (SP) h-region of protein substrates. This ensures the selectivity of the complex towards h-regions shorter than 18-20 amino acids. SPC associates with the translocon complex.

It is found in the endoplasmic reticulum membrane. The enzyme catalyses Cleavage of hydrophobic, N-terminal signal or leader sequences from secreted and periplasmic proteins.. Functionally, catalytic component of the signal peptidase complex (SPC) which catalyzes the cleavage of N-terminal signal sequences from nascent proteins as they are translocated into the lumen of the endoplasmic reticulum. Specifically cleaves N-terminal signal peptides that contain a hydrophobic alpha-helix (h-region) shorter than 18-20 amino acids. The sequence is that of Signal peptidase complex catalytic subunit SEC11 (SEC11) from Metarhizium robertsii (strain ARSEF 23 / ATCC MYA-3075) (Metarhizium anisopliae (strain ARSEF 23)).